A 761-amino-acid polypeptide reads, in one-letter code: Subtilisin-like protease SBT3.15 (761 aa).

Positions 1–21 are cleaved as a signal peptide; it reads MENSFLSSKLVFLLAIALVLF. Positions 22–120 are cleaved as a propeptide — activation peptide; that stretch reads LNTELSFLTA…VIPNRILKLK (99 aa). The Inhibitor I9 domain occupies 41–119; that stretch reads VYIVYLGQRE…HVIPNRILKL (79 aa). A Peptidase S8 domain is found at 134–613; it reads PTSFSSSSSA…GGLVNPEKAA (480 aa). Asparagine 151 carries N-linked (GlcNAc...) asparagine glycosylation. Aspartate 164 functions as the Charge relay system in the catalytic mechanism. Asparagine 197 carries an N-linked (GlcNAc...) asparagine glycan. Catalysis depends on histidine 241, which acts as the Charge relay system. N-linked (GlcNAc...) asparagine glycans are attached at residues asparagine 256 and asparagine 384. Residue serine 544 is the Charge relay system of the active site. Asparagine 636 carries an N-linked (GlcNAc...) asparagine glycan.

It belongs to the peptidase S8 family.

The protein localises to the secreted. This Arabidopsis thaliana (Mouse-ear cress) protein is Subtilisin-like protease SBT3.15.